The sequence spans 119 residues: Putative F-box protein At2g39415 (119 aa).

Residues 37–92 (IDSISSLPDVILQQILSSLPTNLAIRTSVLSTRWRHVWSDTPYIYFDGPGTLYRGL) enclose the F-box domain.

The chain is Putative F-box protein At2g39415 from Arabidopsis thaliana (Mouse-ear cress).